Consider the following 2153-residue polypeptide: RNA-directed RNA polymerase L (2153 aa).

5 residues coordinate Mn(2+): His-36, Glu-54, Asp-97, Glu-110, and Val-111. Lys-124 serves as the catalytic For endonuclease activity. One can recognise a RdRp catalytic domain in the interval 957–1143 (TGKSIKFKRK…AINQEMWKSM (187 aa)). Asp-1100 contacts Mg(2+).

Belongs to the Bunyavirales RNA polymerase family. In terms of assembly, interacts with the viral nucleoprotein. Mn(2+) is required as a cofactor. Requires Mg(2+) as cofactor.

The protein resides in the host cytoplasm. It localises to the host perinuclear region. It catalyses the reaction RNA(n) + a ribonucleoside 5'-triphosphate = RNA(n+1) + diphosphate. Its function is as follows. RNA-dependent RNA polymerase, which is responsible for the replication and transcription of the viral RNA genome using antigenomic RNA as an intermediate. During transcription, synthesizes subgenomic RNAs and assures their capping by a cap-snatching mechanism, which involves the endonuclease activity cleaving the host capped pre-mRNAs. These short capped RNAs are then used as primers for viral transcription. Cleaves ssRNA substrates but not DNA. Seems to downregulate the expression of its own and heterologous mRNAs through its endonuclease activity. In Abrothrix longipilis (Long-haired grass mouse), this protein is RNA-directed RNA polymerase L.